Reading from the N-terminus, the 764-residue chain is 5-methyltetrahydropteroyltriglutamate--homocysteine methyltransferase (764 aa).

5-methyltetrahydropteroyltri-L-glutamate contacts are provided by residues 17-20 (RELK) and lysine 117. L-homocysteine-binding positions include 436 to 438 (IGS) and glutamate 489. L-methionine is bound by residues 436-438 (IGS) and glutamate 489. Residues 520 to 521 (RC) and tryptophan 566 contribute to the 5-methyltetrahydropteroyltri-L-glutamate site. Aspartate 604 is an L-homocysteine binding site. Aspartate 604 is a binding site for L-methionine. Glutamate 610 serves as a coordination point for 5-methyltetrahydropteroyltri-L-glutamate. Zn(2+) contacts are provided by histidine 646, cysteine 648, and glutamate 670. Histidine 699 serves as the catalytic Proton donor. Cysteine 731 serves as a coordination point for Zn(2+).

This sequence belongs to the vitamin-B12 independent methionine synthase family. The cofactor is Zn(2+).

The catalysed reaction is 5-methyltetrahydropteroyltri-L-glutamate + L-homocysteine = tetrahydropteroyltri-L-glutamate + L-methionine. It participates in amino-acid biosynthesis; L-methionine biosynthesis via de novo pathway; L-methionine from L-homocysteine (MetE route): step 1/1. Functionally, catalyzes the transfer of a methyl group from 5-methyltetrahydrofolate to homocysteine resulting in methionine formation. The sequence is that of 5-methyltetrahydropteroyltriglutamate--homocysteine methyltransferase from Baumannia cicadellinicola subsp. Homalodisca coagulata.